Consider the following 195-residue polypeptide: Endoribonuclease YbeY (195 aa).

Histidine 152, histidine 156, and histidine 162 together coordinate Zn(2+).

The protein belongs to the endoribonuclease YbeY family. Zn(2+) is required as a cofactor.

The protein localises to the cytoplasm. Its function is as follows. Single strand-specific metallo-endoribonuclease involved in late-stage 70S ribosome quality control and in maturation of the 3' terminus of the 16S rRNA. In Rhodopseudomonas palustris (strain BisB5), this protein is Endoribonuclease YbeY.